The primary structure comprises 34 residues: DCPTRCPTTCANGWECCKGYPCVNKACSGCTHGK.

4-hydroxyproline occurs at positions 3 and 7. W14 is modified (6'-bromotryptophan). K18 carries the 5-hydroxylysine modification. The residue at position 21 (P21) is a 4-hydroxyproline. K25 bears the 5-hydroxylysine mark. At H32 the chain carries Histidine amide.

Contains 4 disulfide bonds. Post-translationally, the diastereomeric form of 5-hydroxylysine found was not conclusively established, but it is probably 5R. As to expression, expressed by the venom duct.

It is found in the secreted. The polypeptide is Conotoxin de13a (Conasprella delessertii (Sozon's cone)).